Reading from the N-terminus, the 442-residue chain is MPKIFRSLYVQVLIAIALGILTGFLFPSLGESLKPLGDGFIKLIKMIIAPIIFATVVSGIAHMRDTKKVGRVGGKALLYFELVTTFALVIGLVIVNILGPGRGMNIDPASLDTSGISKYTDAAGEQTVADFILHIIPDTLISAFTQGDLLQVLLVAVLFGFALLRLGKVGDTILKGIDTVNQVIFVILGFVMRLAPIGAFGAMAFTIGKYGVGSLAQLGYLMITFYATCALFIFGVLGLIARMSGFSILKLIRYIKEELLLVLGTSSSESALPRLMVKLEHAGAEKSVVGLVVPSGYSFNLDGTSIYLTMAAMFIAQATNTELSLGQQLGLLGVLLLTSKGAAGVTGSGFITLAATLSAVGDVPVAGLALILGIDRFMSEARALTNFIGNAVAALVIAKSERAVDVDRLTRALNGEDLPTIEPDVHSEERGEGRELDSLRPA.

Transmembrane regions (helical) follow at residues 10-30, 40-60, 77-97, 144-164, 183-203, 221-241, 331-351, and 354-374; these read VQVL…PSLG, FIKL…VSGI, LLYF…IVNI, FTQG…FALL, VIFV…FGAM, LMIT…GLIA, LLGV…SGFI, and AATL…ILGI. Residues 418–442 are disordered; the sequence is LPTIEPDVHSEERGEGRELDSLRPA. Over residues 423–442 the composition is skewed to basic and acidic residues; that stretch reads PDVHSEERGEGRELDSLRPA.

It belongs to the dicarboxylate/amino acid:cation symporter (DAACS) (TC 2.A.23) family.

It is found in the cell membrane. Responsible for the transport of dicarboxylates such as succinate, fumarate, and malate across the membrane. This Deinococcus deserti (strain DSM 17065 / CIP 109153 / LMG 22923 / VCD115) protein is C4-dicarboxylate transport protein.